The primary structure comprises 109 residues: MLLKSTTRHIRIYTAEVKNNQLIESNNVLTLDVDPDNEFNWEEVALNKVYSKFDELVESYNGEELSEYNLRRIGSDLEHFIRSLLQKGEISYNLNARVQNYSMGLPKLG.

It belongs to the complex I NdhM subunit family. As to quaternary structure, NDH-1 can be composed of about 15 different subunits; different subcomplexes with different compositions have been identified which probably have different functions.

The protein localises to the cellular thylakoid membrane. It carries out the reaction a plastoquinone + NADH + (n+1) H(+)(in) = a plastoquinol + NAD(+) + n H(+)(out). The enzyme catalyses a plastoquinone + NADPH + (n+1) H(+)(in) = a plastoquinol + NADP(+) + n H(+)(out). NDH-1 shuttles electrons from an unknown electron donor, via FMN and iron-sulfur (Fe-S) centers, to quinones in the respiratory and/or the photosynthetic chain. The immediate electron acceptor for the enzyme in this species is believed to be plastoquinone. Couples the redox reaction to proton translocation, and thus conserves the redox energy in a proton gradient. Cyanobacterial NDH-1 also plays a role in inorganic carbon-concentration. In Microcystis aeruginosa (strain NIES-843 / IAM M-2473), this protein is NAD(P)H-quinone oxidoreductase subunit M.